The primary structure comprises 437 residues: GTPase Der (437 aa).

EngA-type G domains lie at 4–167 (PVVA…AEKD) and 175–352 (IRFS…DHQH). GTP is bound by residues 10–17 (GRPNVGKS), 57–61 (DTGGI), 119–122 (NKVD), 181–188 (GRPNVGKS), 229–233 (DTAGI), and 294–297 (NKWD). The region spanning 353–437 (RRIQSAVLND…PIRLIKRRRK (85 aa)) is the KH-like domain.

This sequence belongs to the TRAFAC class TrmE-Era-EngA-EngB-Septin-like GTPase superfamily. EngA (Der) GTPase family. In terms of assembly, associates with the 50S ribosomal subunit.

Its function is as follows. GTPase that plays an essential role in the late steps of ribosome biogenesis. This is GTPase Der from Limosilactobacillus fermentum (strain NBRC 3956 / LMG 18251) (Lactobacillus fermentum).